The following is a 971-amino-acid chain: Translation initiation factor IF-2 (971 aa).

Positions 49-63 (HLRKSHGATDGDKRK) are enriched in basic and acidic residues. Disordered stretches follow at residues 49-86 (HLRK…ARTI) and 101-385 (DVAE…APTE). Residues 105–114 (GAEQGQAQVA) are compositionally biased toward low complexity. The segment covering 121-177 (ELKRREEEARREAELLEKQAQELRERQERLEREEAERRAREEAAEAQRRRAEEEAAA) has biased composition (basic and acidic residues). The segment covering 178 to 209 (KRAAAAAVEAQQVAAQQAAEAQQETAGAQSAQ) has biased composition (low complexity). The segment covering 210–261 (DEARAAAERAAQREAAKKAEDAAREAADKTRAEQEEIRKRREAAEAEARAIR) has biased composition (basic and acidic residues). A compositionally biased stretch (pro residues) spans 277–286 (PPKPVEPPKP). The segment covering 298–325 (KPAGASAARPAVKKPAGAAPATTAPAGA) has biased composition (low complexity). Residues 355 to 368 (SSGGVDRGWRGGPK) are compositionally biased toward gly residues. One can recognise a tr-type G domain in the interval 471–640 (PRPPVVTVMG…LLQAEVLELK (170 aa)). Residues 480–487 (GHVDHGKT) form a G1 region. 480–487 (GHVDHGKT) is a binding site for GTP. A G2 region spans residues 505 to 509 (GITQH). The interval 526–529 (DTPG) is G3. GTP is bound by residues 526–530 (DTPGH) and 580–583 (NKID). The G4 stretch occupies residues 580–583 (NKID). Residues 616-618 (SAK) are G5.

The protein belongs to the TRAFAC class translation factor GTPase superfamily. Classic translation factor GTPase family. IF-2 subfamily.

It is found in the cytoplasm. One of the essential components for the initiation of protein synthesis. Protects formylmethionyl-tRNA from spontaneous hydrolysis and promotes its binding to the 30S ribosomal subunits. Also involved in the hydrolysis of GTP during the formation of the 70S ribosomal complex. The polypeptide is Translation initiation factor IF-2 (Burkholderia ambifaria (strain ATCC BAA-244 / DSM 16087 / CCUG 44356 / LMG 19182 / AMMD) (Burkholderia cepacia (strain AMMD))).